Here is a 177-residue protein sequence, read N- to C-terminus: Large ribosomal subunit protein uL10 (177 aa).

The protein belongs to the universal ribosomal protein uL10 family. As to quaternary structure, part of the ribosomal stalk of the 50S ribosomal subunit. The N-terminus interacts with L11 and the large rRNA to form the base of the stalk. The C-terminus forms an elongated spine to which L12 dimers bind in a sequential fashion forming a multimeric L10(L12)X complex.

Functionally, forms part of the ribosomal stalk, playing a central role in the interaction of the ribosome with GTP-bound translation factors. The polypeptide is Large ribosomal subunit protein uL10 (Variovorax paradoxus (strain S110)).